Reading from the N-terminus, the 216-residue chain is Superoxide dismutase [Cu-Zn], chloroplastic (216 aa).

A chloroplast-targeting transit peptide spans 1-62 (MACHSALAAV…ASPRSMVVVA (62 aa)). Residues His108, His110, and His125 each coordinate Cu cation. A disulfide bond links Cys119 and Cys208. Positions 125, 133, 142, and 145 each coordinate Zn(2+). His182 contributes to the Cu cation binding site.

It belongs to the Cu-Zn superoxide dismutase family. In terms of assembly, homotetramer. The cofactor is Cu cation. Zn(2+) is required as a cofactor.

It is found in the plastid. The protein localises to the chloroplast. The enzyme catalyses 2 superoxide + 2 H(+) = H2O2 + O2. Functionally, destroys radicals which are normally produced within the cells and which are toxic to biological systems. The polypeptide is Superoxide dismutase [Cu-Zn], chloroplastic (SODCP) (Zantedeschia aethiopica (White calla lily)).